A 360-amino-acid polypeptide reads, in one-letter code: DNA replication and repair protein RecF (360 aa).

An ATP-binding site is contributed by 30–37; it reads GQNGSGKT.

It belongs to the RecF family.

It localises to the cytoplasm. Functionally, the RecF protein is involved in DNA metabolism; it is required for DNA replication and normal SOS inducibility. RecF binds preferentially to single-stranded, linear DNA. It also seems to bind ATP. This is DNA replication and repair protein RecF from Shewanella baltica (strain OS223).